The following is a 537-amino-acid chain: Lysosomal cobalamin transport escort protein LMBD1 (537 aa).

The Extracellular segment spans residues 1 to 7; it reads MAAAAAE. The helical transmembrane segment at 8–28 threads the bilayer; that stretch reads LVIGWCIFGLLLLAILAFCWV. Over 29–47 the chain is Cytoplasmic; it reads YVRKYQSQRESEVVSTVTA. A helical membrane pass occupies residues 48-68; sequence IFSLAVALITSALLPVDIFLV. Over 69–97 the chain is Extracellular; it reads SYMKNQNGTFKDWADANVTVQIENTVLYG. N-linked (GlcNAc...) asparagine glycosylation is found at asparagine 75 and asparagine 85. A helical membrane pass occupies residues 98–118; the sequence is YYTLYSVILFCVFFWIPFVYF. The Cytoplasmic portion of the chain corresponds to 119–141; sequence YYEEKDEDDASKCTQIKTALKYT. A helical transmembrane segment spans residues 142-162; the sequence is LGFVVICALLLLVGAFVPLHL. Residues 163–185 lie on the Extracellular side of the membrane; sequence PNNNNSTEWEKVKLLFEDLGTGQ. 2 N-linked (GlcNAc...) asparagine glycosylation sites follow: asparagine 166 and asparagine 167. A helical membrane pass occupies residues 186-206; it reads GLAALSFSISSLTLIGMLAAI. The Cytoplasmic portion of the chain corresponds to 207 to 302; that stretch reads TYTAYGMSAL…KFCGALRPLK (96 aa). Residues 229 to 232 carry the YERL motif; mediates interaction with adapter protein complex 2 and is essential for its function in clathrin-mediated endocytosis of INSR motif; it reads YERL. At threonine 235 the chain carries Phosphothreonine. Residues 291-294 carry the WTKF motif; mediates interaction with adapter protein complex 2 and is essential for its function in clathrin-mediated endocytosis of INSR motif; it reads WTKF. The chain crosses the membrane as a helical span at residues 303–323; that stretch reads IIWGIFFILVALLFVISLFLS. The Extracellular segment spans residues 324–361; it reads NLDKALHSAGIDSGFIIFGTNLSNPLNMLLPLLQTVFP. Residue asparagine 344 is glycosylated (N-linked (GlcNAc...) asparagine). The chain crosses the membrane as a helical span at residues 362–382; the sequence is LDYILITIIIMYFIFTSMAGI. Topologically, residues 383–405 are cytoplasmic; that stretch reads RNIGIWFFWIRLYKIRRGRTRPQ. The chain crosses the membrane as a helical span at residues 406–426; it reads ALLFLCMILLLIVLHTSYMIY. Topologically, residues 427 to 483 are extracellular; sequence SLAPQYVMYGSQNYLIESNITSDAHKGNSTLAVPKRCDADAPKDQCTVTRTYIFLHK. N-linked (GlcNAc...) asparagine glycosylation is found at asparagine 445 and asparagine 454. A helical transmembrane segment spans residues 484-504; the sequence is FWFFSAAYYFGNWAFLVVFLI. The Cytoplasmic segment spans residues 505 to 537; that stretch reads GLIVSCCKGKKSVIEGVDEDSDLSDDEPSAYSA. Residues serine 525 and serine 528 each carry the phosphoserine modification.

Belongs to the LIMR family. LMBRD1 subfamily. Interacts with ABCD4; this interaction induces the translocation of ABCD4 from the endoplasmic reticulum to the lysosome. Interacts with ABCD4 and MMACHC; this interaction ensures the transport of cobalamin from the lysosome to the cytoplasm. Interacts with INSR, adapter protein complex 2 and clathrin heavy chain. Post-translationally, N-glycosylated.

The protein resides in the endoplasmic reticulum membrane. Its subcellular location is the lysosome membrane. It localises to the cell membrane. The protein localises to the cytoplasmic vesicle. It is found in the clathrin-coated vesicle. Functionally, lysosomal membrane chaperone required to export cobalamin (vitamin B12) from the lysosome to the cytosol, allowing its conversion to cofactors. Targets ABCD4 transporter from the endoplasmic reticulum to the lysosome. Then forms a complex with lysosomal ABCD4 and cytoplasmic MMACHC to transport cobalamin across the lysosomal membrane. Acts as an adapter protein which plays an important role in mediating and regulating the internalization of the insulin receptor (INSR). Involved in clathrin-mediated endocytosis of INSR via its interaction with adapter protein complex 2. Essential for the initiation of gastrulation and early formation of mesoderm structures during embryogenesis. In Mus musculus (Mouse), this protein is Lysosomal cobalamin transport escort protein LMBD1.